A 90-amino-acid chain; its full sequence is Small ribosomal subunit protein uS17m (90 aa).

Belongs to the universal ribosomal protein uS17 family. Component of the mitochondrial small ribosomal subunit (mt-SSU). Mature yeast 74S mitochondrial ribosomes consist of a small (37S) and a large (54S) subunit. The 37S small subunit contains a 15S ribosomal RNA (15S mt-rRNA) and at least 32 different proteins. The 54S large subunit contains a 21S rRNA (21S mt-rRNA) and at least 45 different proteins.

The protein resides in the mitochondrion. Functionally, component of the mitochondrial ribosome (mitoribosome), a dedicated translation machinery responsible for the synthesis of mitochondrial genome-encoded proteins, including at least some of the essential transmembrane subunits of the mitochondrial respiratory chain. The mitoribosomes are attached to the mitochondrial inner membrane and translation products are cotranslationally integrated into the membrane. uS17m may have a meiosis-specific role as it accumulates during the middle stage of sporulation. In Schizosaccharomyces pombe (strain 972 / ATCC 24843) (Fission yeast), this protein is Small ribosomal subunit protein uS17m.